A 545-amino-acid polypeptide reads, in one-letter code: MTTKYIFVTGGVVSSLGKGIAAASLAAILEARGLDVTIMKLDPYINVDPGTMSPTQHGEVFVTEDGAETDLDLGHYERFIRTKMTRRNNFTTGRIYADVLRKERRGDYLGATIQVIPHITNAIKERVIAGAEGHQVAIVEVGGTVGDIESLPFLEAIRQLAAEVGRNNAMFMHLTLVPYLAAAGEVKTKPTQHSVKELLSIGIQPDVLICRSDRAIPAVERAKIALFCNVPERAVISMKDVDSIYKIPALLKSQNLDSYFTERFGLECKEADLAEWEQVIYEEANPTAEVTIGMVGKYVSLPDAYKSVNEALKHGGLKTRLSVNIKYIDSQDIETRGAELLEGLDAILVPGGFGERGVEGKIQAAQYARENKIPYLGICLGMQVAMIEFARNVAGMEGAHSSEFKKDCAYPVVGLITEWVDDEGNIETRTEKSDLGGTMRLGSQLCHLVEGSKVRQMYGSPTIYERHRHRYEVNNKLLPQIEAAGLKVTGLSADKKLVEIIEIPDHPWFVAAQFHPEFTSTPRDGHALFAGFVKAAGEYQKRNLK.

Residues 1 to 266 form an amidoligase domain region; it reads MTTKYIFVTG…DSYFTERFGL (266 aa). Residue serine 14 participates in CTP binding. Serine 14 is a UTP binding site. ATP contacts are provided by residues 15 to 20 and aspartate 72; that span reads SLGKGI. Aspartate 72 and glutamate 140 together coordinate Mg(2+). CTP-binding positions include 147–149, 187–192, and lysine 223; these read DIE and KTKPTQ. Residues 187-192 and lysine 223 contribute to the UTP site; that span reads KTKPTQ. Residue 239 to 241 participates in ATP binding; it reads KDV. In terms of domain architecture, Glutamine amidotransferase type-1 spans 291–542; sequence TIGMVGKYVS…VKAAGEYQKR (252 aa). Residue glycine 352 participates in L-glutamine binding. The Nucleophile; for glutamine hydrolysis role is filled by cysteine 379. Residues 380–383, glutamate 403, and arginine 470 contribute to the L-glutamine site; that span reads LGMQ. Residues histidine 515 and glutamate 517 contribute to the active site.

It belongs to the CTP synthase family. In terms of assembly, homotetramer.

The enzyme catalyses UTP + L-glutamine + ATP + H2O = CTP + L-glutamate + ADP + phosphate + 2 H(+). It carries out the reaction L-glutamine + H2O = L-glutamate + NH4(+). The catalysed reaction is UTP + NH4(+) + ATP = CTP + ADP + phosphate + 2 H(+). It participates in pyrimidine metabolism; CTP biosynthesis via de novo pathway; CTP from UDP: step 2/2. With respect to regulation, allosterically activated by GTP, when glutamine is the substrate; GTP has no effect on the reaction when ammonia is the substrate. The allosteric effector GTP functions by stabilizing the protein conformation that binds the tetrahedral intermediate(s) formed during glutamine hydrolysis. Inhibited by the product CTP, via allosteric rather than competitive inhibition. In terms of biological role, catalyzes the ATP-dependent amination of UTP to CTP with either L-glutamine or ammonia as the source of nitrogen. Regulates intracellular CTP levels through interactions with the four ribonucleotide triphosphates. The protein is CTP synthase of Aeromonas hydrophila subsp. hydrophila (strain ATCC 7966 / DSM 30187 / BCRC 13018 / CCUG 14551 / JCM 1027 / KCTC 2358 / NCIMB 9240 / NCTC 8049).